The primary structure comprises 609 residues: Alpha-glucosides permease MPH2 (609 aa).

The Cytoplasmic portion of the chain corresponds to 1–106 (MKNLSFLINR…AAAWSLLVST (106 aa)). The helical transmembrane segment at 107–127 (TLIMEGYDTAILGAFYALPIF) threads the bilayer. At 128 to 142 (QRKFGSQNDKTGEWE) the chain is on the extracellular side. Residues 143-163 (ISASWQIGLTLCYMAGEIVGL) traverse the membrane as a helical segment. At 164–178 (QLTGPSVDLVGNRYT) the chain is on the cytoplasmic side. Residues 179–199 (LIIALFFLAAFTFILYFCNSL) form a helical membrane-spanning segment. Position 200 (Gly-200) is a topological domain, extracellular. A helical transmembrane segment spans residues 201–221 (MIAVGQALCGMPWGCFQCLTV). The Cytoplasmic portion of the chain corresponds to 222-234 (SYASEICPLALRY). A helical transmembrane segment spans residues 235–255 (YLTTYSNLCWLFGQLFAAGIM). At 256–270 (KNSQKKYADSELGYK) the chain is on the extracellular side. The chain crosses the membrane as a helical span at residues 271-291 (LPFALQWILPVPLALGIFFAP). The Cytoplasmic portion of the chain corresponds to 292–363 (ESPWWLVKKG…EDKINRRRTR (72 aa)). A helical membrane pass occupies residues 364 to 384 (ITCLCWAGQATCGSILIGYST). The Extracellular segment spans residues 385 to 397 (YFYEKAGVSTEMS). A helical membrane pass occupies residues 398-418 (FTFSIIQYCLGICATFLSWWA). The Cytoplasmic segment spans residues 419–426 (SKYFGRYD). The helical transmembrane segment at 427–447 (LYAFGLAFQTIVFFIIGGLGC) threads the bilayer. Residues 448 to 459 (SSTHGSKMGSGS) lie on the Extracellular side of the membrane. The helical transmembrane segment at 460–480 (LLMAVAFFYNLGIAPVVFCLV) threads the bilayer. The Cytoplasmic portion of the chain corresponds to 481-492 (SEMPSSRLRTKT). Residues 493–513 (IILARNTYNVVSIICSVLILY) form a helical membrane-spanning segment. The Extracellular segment spans residues 514–525 (QLNSKKWNWGAK). The helical transmembrane segment at 526-546 (SGFFWGVLCFCTLIWAVVDLP) threads the bilayer. Over 547–609 (ETAGKTFVEI…QRNSNVSHHL (63 aa)) the chain is Cytoplasmic.

It belongs to the major facilitator superfamily. Sugar transporter (TC 2.A.1.1) family.

The protein localises to the cell membrane. In terms of biological role, high-affinity uptake of maltose and maltotriose. Also transports alpha-methylglucoside, glucose and turanose but not melezitose or trehalose. The chain is Alpha-glucosides permease MPH2 (MPH2) from Saccharomyces cerevisiae (strain ATCC 204508 / S288c) (Baker's yeast).